Here is a 310-residue protein sequence, read N- to C-terminus: MSEDAVKNAILIAGPTASGKSALAIRMAKATGGFIVNTDSMQVYGVLDLLTARPSRADLAEAEHFLYGHVPPSSTYSTGKWFEDVEALLGRCGLQGRVPIFVGGTGLYFRALLGGLSQMPEVSAQVRDHWRGRMEAEGAKALHAVLCVRDPAIAAALQPSDSQRIVRALEVLESTGKSLLEWQKVKGRALVDDQSAQKIVLRPDRAWLGERIARRFSAMWAEGAIDEVRALLALDLDPALPAMKAIGVREVSAFLAETMSREEAIERSVIATRQYAKRQSTWFRNQLGEDWRVYASGEEVFQGGSFRDPQ.

14–21 (GPTASGKS) is a binding site for ATP. 16-21 (TASGKS) provides a ligand contact to substrate. Interaction with substrate tRNA regions lie at residues 39–42 (DSMQ) and 163–167 (QRIVR).

This sequence belongs to the IPP transferase family. In terms of assembly, monomer. It depends on Mg(2+) as a cofactor.

It carries out the reaction adenosine(37) in tRNA + dimethylallyl diphosphate = N(6)-dimethylallyladenosine(37) in tRNA + diphosphate. Functionally, catalyzes the transfer of a dimethylallyl group onto the adenine at position 37 in tRNAs that read codons beginning with uridine, leading to the formation of N6-(dimethylallyl)adenosine (i(6)A). The sequence is that of tRNA dimethylallyltransferase from Brucella suis biovar 1 (strain 1330).